A 168-amino-acid polypeptide reads, in one-letter code: uncharacterized protein (168 aa).

CBS domains lie at I20–L77 and M117–I168.

This is an uncharacterized protein from Methanocaldococcus jannaschii (strain ATCC 43067 / DSM 2661 / JAL-1 / JCM 10045 / NBRC 100440) (Methanococcus jannaschii).